Consider the following 931-residue polypeptide: Adhesion G protein-coupled receptor E1 (931 aa).

Residues 1–27 form the signal peptide; the sequence is MWGFWLLLFWGFSGMYRWGMTTLPTLG. The Extracellular segment spans residues 28 to 644; that stretch reads QTLGGVNECQ…IMASGELTME (617 aa). 2 EGF-like domains span residues 32–80 and 81–132; these read GVNE…VECQ and DVNE…FLCA. Intrachain disulfides connect C36/C48, C42/C57, C59/C79, C85/C98, C92/C107, C109/C131, C137/C149, C143/C158, C160/C171, C177/C189, C183/C198, C200/C220, C226/C239, C233/C248, C250/C270, C276/C286, C280/C295, C297/C317, C323/C336, C330/C345, and C347/C366. An EGF-like 3; calcium-binding domain is found at 133 to 172; it reads DVDECLTIGICPKYSNCSNSVGSYSCTCQPGFVLNGSICE. Residues N148 and N167 are each glycosylated (N-linked (GlcNAc...) asparagine). The region spanning 173–221 is the EGF-like 4; calcium-binding domain; the sequence is DEDECVTRDVCPEHATCHNTLGSYYCTCNSGLESSGGGPMFQGLDESCE. The 50-residue stretch at 222-271 folds into the EGF-like 5; calcium-binding domain; that stretch reads DVDECSRNSTLCGPTFICINTLGSYSCSCPAGFSLPTFQILGHPADGNCT. A glycan (N-linked (GlcNAc...) asparagine) is linked at N229. N-linked (GlcNAc...) asparagine glycosylation is found at N269 and N283. Residues 272–318 enclose the EGF-like 6; calcium-binding domain; the sequence is DIDECDDTCPLNSSCTNTIGSYFCTCHPGFASSNGQLNFKDLEVTCE. Residues 319-367 form the EGF-like 7; calcium-binding domain; the sequence is DIDECTQDPLQCGLNSVCTNVPGSYICGCLPDFQMDPEGSQGYGNFNCK. N405, N417, N474, and N498 each carry an N-linked (GlcNAc...) asparagine glycan. The 161-residue stretch at 482–642 folds into the GAIN-B domain; sequence EYLDIESKVI…AIIMASGELT (161 aa). A Cell attachment site motif is present at residues 506–508; it reads RGD. 2 disulfides stabilise this stretch: C595–C624 and C612–C626. Residues 595 to 642 form a GPS region; the sequence is CVSWNTDVEDGRWTPSGCEIVEASETHTVCSCNRMANLAIIMASGELT. The helical transmembrane segment at 645–672 threads the bilayer; the sequence is FSLYIISHVGTVISLVCLALAIATFLLC. Over 673–679 the chain is Cytoplasmic; sequence RAVQNHN. A helical membrane pass occupies residues 680-701; sequence TYMHLHLCVCLFLAKILFLTGI. Topologically, residues 702-711 are extracellular; it reads DKTDNQTACA. Residue N706 is glycosylated (N-linked (GlcNAc...) asparagine). A helical membrane pass occupies residues 712–735; the sequence is IIAGFLHYLFLACFFWMLVEAVML. Topologically, residues 736-754 are cytoplasmic; it reads FLMVRNLKVVNYFSSRNIK. The helical transmembrane segment at 755–776 threads the bilayer; that stretch reads MLHLCAFGYGLPVLVVIISASV. Residues 777-792 lie on the Extracellular side of the membrane; that stretch reads QPRGYGMHNRCWLNTE. The helical transmembrane segment at 793-821 threads the bilayer; it reads TGFIWSFLGPVCMIITINSVLLAWTLWVL. Residues 822 to 839 are Cytoplasmic-facing; sequence RQKLCSVSSEVSKLKDTR. The chain crosses the membrane as a helical span at residues 840-859; it reads LLTFKAIAQIFILGCSWVLG. Residues 860 to 874 are Extracellular-facing; it reads IFQIGPLASIMAYLF. The chain crosses the membrane as a helical span at residues 875–897; that stretch reads TIINSLQGAFIFLIHCLLNRQVR. Residues 898-931 are Cytoplasmic-facing; it reads DEYKKLLTRKTDLSSHSQTSGILLSSMPSTSKMG.

Belongs to the G-protein coupled receptor 2 family. Adhesion G-protein coupled receptor (ADGR) subfamily. In terms of tissue distribution, in macrophages; but absent from those which are localized within T-cell areas of lymph nodes and spleen. Low level of expression on blood monocytes.

Its subcellular location is the cell membrane. Functionally, orphan receptor involved in cell adhesion and probably in cell-cell interactions specifically involving cells of the immune system. May play a role in regulatory T-cells (Treg) development. This Mus musculus (Mouse) protein is Adhesion G protein-coupled receptor E1 (Adgre1).